The sequence spans 155 residues: MAKKVVGGGVKPDLRFSDESVARLINAVMLDGKKDVAAKIVYGAMDIIAGKMKDEEPLEVFRRALSNVAPLVEVRSKRVGGATYQIPMEVKASRRDALAFRWIKLYATRRGGRSMSEKLAAELMDAASEQGASVKKRDEVHRMADANKAFAHFRF.

The protein belongs to the universal ribosomal protein uS7 family. As to quaternary structure, part of the 30S ribosomal subunit. Contacts proteins S9 and S11.

Its function is as follows. One of the primary rRNA binding proteins, it binds directly to 16S rRNA where it nucleates assembly of the head domain of the 30S subunit. Is located at the subunit interface close to the decoding center, probably blocks exit of the E-site tRNA. The polypeptide is Small ribosomal subunit protein uS7 (Chlorobium phaeobacteroides (strain BS1)).